A 193-amino-acid chain; its full sequence is Large ribosomal subunit protein uL18 (193 aa).

The protein belongs to the universal ribosomal protein uL18 family. As to quaternary structure, part of the 50S ribosomal subunit. Contacts the 5S and 23S rRNAs.

Functionally, this is one of the proteins that bind and probably mediate the attachment of the 5S RNA into the large ribosomal subunit, where it forms part of the central protuberance. In Methanococcus maripaludis (strain C5 / ATCC BAA-1333), this protein is Large ribosomal subunit protein uL18.